The following is a 292-amino-acid chain: Aspartate carbamoyltransferase catalytic subunit (292 aa).

The carbamoyl phosphate site is built by Arg50 and Thr51. Lys78 contacts L-aspartate. Arg100, His128, and Gln131 together coordinate carbamoyl phosphate. Arg161 and Arg211 together coordinate L-aspartate. Residues Gly250 and Pro251 each coordinate carbamoyl phosphate.

It belongs to the aspartate/ornithine carbamoyltransferase superfamily. ATCase family. Heterododecamer (2C3:3R2) of six catalytic PyrB chains organized as two trimers (C3), and six regulatory PyrI chains organized as three dimers (R2).

It carries out the reaction carbamoyl phosphate + L-aspartate = N-carbamoyl-L-aspartate + phosphate + H(+). It functions in the pathway pyrimidine metabolism; UMP biosynthesis via de novo pathway; (S)-dihydroorotate from bicarbonate: step 2/3. Functionally, catalyzes the condensation of carbamoyl phosphate and aspartate to form carbamoyl aspartate and inorganic phosphate, the committed step in the de novo pyrimidine nucleotide biosynthesis pathway. The chain is Aspartate carbamoyltransferase catalytic subunit from Nitratiruptor sp. (strain SB155-2).